The primary structure comprises 625 residues: tRNA uridine 5-carboxymethylaminomethyl modification enzyme MnmG (625 aa).

Residue 14–19 (GAGHAG) coordinates FAD. 273–287 (GPRYCPSIEDKIVRF) contacts NAD(+).

The protein belongs to the MnmG family. In terms of assembly, homodimer. Heterotetramer of two MnmE and two MnmG subunits. FAD is required as a cofactor.

The protein localises to the cytoplasm. Functionally, NAD-binding protein involved in the addition of a carboxymethylaminomethyl (cmnm) group at the wobble position (U34) of certain tRNAs, forming tRNA-cmnm(5)s(2)U34. This Clostridium botulinum (strain Okra / Type B1) protein is tRNA uridine 5-carboxymethylaminomethyl modification enzyme MnmG.